The sequence spans 427 residues: Phosphatidylserine decarboxylase proenzyme 1, mitochondrial (427 aa).

Residues 1–77 (MRSYLRFSDR…RRFVYKLDQA (77 aa)) constitute a mitochondrion transit peptide. At 78 to 88 (VTAALGPNGRY) the chain is on the mitochondrial matrix side. The helical transmembrane segment at 89–107 (IAMVGMTASAVLLTFHYKF) threads the bilayer. Topologically, residues 108–427 (REVIAATDNV…TEDERLFAFY (320 aa)) are mitochondrial intermembrane. Catalysis depends on charge relay system; for autoendoproteolytic cleavage activity residues Asp-210, His-268, and Ser-379. Ser-379 acts as the Schiff-base intermediate with substrate; via pyruvic acid; for decarboxylase activity in catalysis. Residue Ser-379 is modified to Pyruvic acid (Ser); by autocatalysis.

This sequence belongs to the phosphatidylserine decarboxylase family. PSD-B subfamily. Eukaryotic type I sub-subfamily. As to quaternary structure, heterodimer of a large membrane-associated beta subunit and a small pyruvoyl-containing alpha subunit. It depends on pyruvate as a cofactor. Post-translationally, is synthesized initially as an inactive proenzyme. Formation of the active enzyme involves a self-maturation process in which the active site pyruvoyl group is generated from an internal serine residue via an autocatalytic post-translational modification. Two non-identical subunits are generated from the proenzyme in this reaction, and the pyruvate is formed at the N-terminus of the alpha chain, which is derived from the carboxyl end of the proenzyme. The autoendoproteolytic cleavage occurs by a canonical serine protease mechanism, in which the side chain hydroxyl group of the serine supplies its oxygen atom to form the C-terminus of the beta chain, while the remainder of the serine residue undergoes an oxidative deamination to produce ammonia and the pyruvoyl prosthetic group on the alpha chain. During this reaction, the Ser that is part of the protease active site of the proenzyme becomes the pyruvoyl prosthetic group, which constitutes an essential element of the active site of the mature decarboxylase.

Its subcellular location is the mitochondrion. The protein resides in the mitochondrion inner membrane. It carries out the reaction a 1,2-diacyl-sn-glycero-3-phospho-L-serine + H(+) = a 1,2-diacyl-sn-glycero-3-phosphoethanolamine + CO2. It functions in the pathway phospholipid metabolism; phosphatidylethanolamine biosynthesis; phosphatidylethanolamine from CDP-diacylglycerol: step 2/2. Catalyzes the formation of phosphatidylethanolamine (PtdEtn) from phosphatidylserine (PtdSer). Plays a central role in phospholipid metabolism and in the interorganelle trafficking of phosphatidylserine. The polypeptide is Phosphatidylserine decarboxylase proenzyme 1, mitochondrial (Toxoplasma gondii (strain ATCC 50853 / GT1)).